Reading from the N-terminus, the 800-residue chain is Cation/H(+) antiporter 19 (800 aa).

Transmembrane regions (helical) follow at residues Phe30 to Ala50, Arg60 to Gly77, Leu92 to Leu112, Leu127 to Val147, Gln158 to Ala178, Met196 to Leu216, Leu224 to Ile244, Phe278 to Ala298, Leu315 to Thr335, Trp343 to Gly363, Ala375 to Ile395, and Ala408 to Ile428. Residues Ala776–Ala800 are disordered. Basic and acidic residues predominate over residues Gln790–Ala800.

The protein belongs to the monovalent cation:proton antiporter 2 (CPA2) transporter (TC 2.A.37) family. CHX (TC 2.A.37.4) subfamily. In terms of tissue distribution, expressed in the whole plant but preferentially in pollen.

It is found in the membrane. May operate as a cation/H(+) antiporter. The chain is Cation/H(+) antiporter 19 (CHX19) from Arabidopsis thaliana (Mouse-ear cress).